Consider the following 261-residue polypeptide: Probable septum site-determining protein MinC (261 aa).

It belongs to the MinC family. In terms of assembly, interacts with MinD and FtsZ.

In terms of biological role, cell division inhibitor that blocks the formation of polar Z ring septums. Rapidly oscillates between the poles of the cell to destabilize FtsZ filaments that have formed before they mature into polar Z rings. Prevents FtsZ polymerization. This is Probable septum site-determining protein MinC from Burkholderia cenocepacia (strain ATCC BAA-245 / DSM 16553 / LMG 16656 / NCTC 13227 / J2315 / CF5610) (Burkholderia cepacia (strain J2315)).